We begin with the raw amino-acid sequence, 156 residues long: ATP synthase subunit b (156 aa).

The chain crosses the membrane as a helical span at residues 7 to 27 (LIAQFVVFFILAGFTMKFVWP).

The protein belongs to the ATPase B chain family. As to quaternary structure, F-type ATPases have 2 components, F(1) - the catalytic core - and F(0) - the membrane proton channel. F(1) has five subunits: alpha(3), beta(3), gamma(1), delta(1), epsilon(1). F(0) has three main subunits: a(1), b(2) and c(10-14). The alpha and beta chains form an alternating ring which encloses part of the gamma chain. F(1) is attached to F(0) by a central stalk formed by the gamma and epsilon chains, while a peripheral stalk is formed by the delta and b chains.

The protein localises to the cell inner membrane. Functionally, f(1)F(0) ATP synthase produces ATP from ADP in the presence of a proton or sodium gradient. F-type ATPases consist of two structural domains, F(1) containing the extramembraneous catalytic core and F(0) containing the membrane proton channel, linked together by a central stalk and a peripheral stalk. During catalysis, ATP synthesis in the catalytic domain of F(1) is coupled via a rotary mechanism of the central stalk subunits to proton translocation. Its function is as follows. Component of the F(0) channel, it forms part of the peripheral stalk, linking F(1) to F(0). This Herminiimonas arsenicoxydans protein is ATP synthase subunit b.